The sequence spans 431 residues: Tol-Pal system protein TolB (431 aa).

A signal peptide spans 1–26 (MRLMTKLGFRALVASCLIAAGGAANA). The disordered stretch occupies residues 411–431 (PQILSVQGGSVREPSWGPFMQ).

The protein belongs to the TolB family. As to quaternary structure, the Tol-Pal system is composed of five core proteins: the inner membrane proteins TolA, TolQ and TolR, the periplasmic protein TolB and the outer membrane protein Pal. They form a network linking the inner and outer membranes and the peptidoglycan layer.

The protein localises to the periplasm. Functionally, part of the Tol-Pal system, which plays a role in outer membrane invagination during cell division and is important for maintaining outer membrane integrity. The protein is Tol-Pal system protein TolB of Burkholderia ambifaria (strain MC40-6).